A 234-amino-acid chain; its full sequence is Enolase-phosphatase E1 (234 aa).

Residues Asp-10 and Glu-12 each coordinate Mg(2+). Residues 125-126 (SS) and Lys-162 each bind substrate. Asp-188 provides a ligand contact to Mg(2+).

This sequence belongs to the HAD-like hydrolase superfamily. MasA/MtnC family. In terms of assembly, monomer. Requires Mg(2+) as cofactor.

The protein resides in the cytoplasm. It localises to the nucleus. The enzyme catalyses 5-methylsulfanyl-2,3-dioxopentyl phosphate + H2O = 1,2-dihydroxy-5-(methylsulfanyl)pent-1-en-3-one + phosphate. It participates in amino-acid biosynthesis; L-methionine biosynthesis via salvage pathway; L-methionine from S-methyl-5-thio-alpha-D-ribose 1-phosphate: step 3/6. The protein operates within amino-acid biosynthesis; L-methionine biosynthesis via salvage pathway; L-methionine from S-methyl-5-thio-alpha-D-ribose 1-phosphate: step 4/6. Bifunctional enzyme that catalyzes the enolization of 2,3-diketo-5-methylthiopentyl-1-phosphate (DK-MTP-1-P) into the intermediate 2-hydroxy-3-keto-5-methylthiopentenyl-1-phosphate (HK-MTPenyl-1-P), which is then dephosphorylated to form the acireductone 1,2-dihydroxy-3-keto-5-methylthiopentene (DHK-MTPene). The protein is Enolase-phosphatase E1 (utr4) of Neurospora crassa (strain ATCC 24698 / 74-OR23-1A / CBS 708.71 / DSM 1257 / FGSC 987).